The chain runs to 113 residues: T cell receptor alpha variable 36/delta variable 7 (113 aa).

A signal peptide spans 1–21 (MMKCPQALLAIFWLLLSWVSS). Positions 23 to 113 (DKVVQSPLSL…DSAIYLCAVE (91 aa)) constitute an Ig-like domain. N-linked (GlcNAc...) asparagine glycosylation is found at Asn-43 and Asn-96. Cys-44 and Cys-110 are joined by a disulfide.

As to quaternary structure, alpha-beta TR is a heterodimer composed of an alpha and beta chain; disulfide-linked. The alpha-beta TR is associated with the transmembrane signaling CD3 coreceptor proteins to form the TR-CD3 (TcR or TCR). The assembly of alpha-beta TR heterodimers with CD3 occurs in the endoplasmic reticulum where a single alpha-beta TR heterodimer associates with one CD3D-CD3E heterodimer, one CD3G-CD3E heterodimer and one CD247 homodimer forming a stable octameric structure. CD3D-CD3E and CD3G-CD3E heterodimers preferentially associate with TR alpha and TR beta chains, respectively. The association of the CD247 homodimer is the last step of TcR assembly in the endoplasmic reticulum and is required for transport to the cell surface.

The protein resides in the cell membrane. In terms of biological role, v region of the variable domain of T cell receptor (TR) alpha chain that participates in the antigen recognition. Alpha-beta T cell receptors are antigen specific receptors which are essential to the immune response and are present on the cell surface of T lymphocytes. Recognize peptide-major histocompatibility (MH) (pMH) complexes that are displayed by antigen presenting cells (APC), a prerequisite for efficient T cell adaptive immunity against pathogens. Binding of alpha-beta TR to pMH complex initiates TR-CD3 clustering on the cell surface and intracellular activation of LCK that phosphorylates the ITAM motifs of CD3G, CD3D, CD3E and CD247 enabling the recruitment of ZAP70. In turn ZAP70 phosphorylates LAT, which recruits numerous signaling molecules to form the LAT signalosome. The LAT signalosome propagates signal branching to three major signaling pathways, the calcium, the mitogen-activated protein kinase (MAPK) kinase and the nuclear factor NF-kappa-B (NF-kB) pathways, leading to the mobilization of transcription factors that are critical for gene expression and essential for T cell growth and differentiation. The T cell repertoire is generated in the thymus, by V-(D)-J rearrangement. This repertoire is then shaped by intrathymic selection events to generate a peripheral T cell pool of self-MH restricted, non-autoaggressive T cells. Post-thymic interaction of alpha-beta TR with the pMH complexes shapes TR structural and functional avidity. This chain is T cell receptor alpha variable 36/delta variable 7, found in Homo sapiens (Human).